The primary structure comprises 427 residues: Neuronal pentraxin-2 (427 aa).

An N-terminal signal peptide occupies residues 1–17 (MLALLAAGVAFAVVVLA). Asn144 and Asn185 each carry an N-linked (GlcNAc...) asparagine glycan. The 202-residue stretch at 219–420 (DAFKVSLPFR…GASKWPVETC (202 aa)) folds into the Pentraxin (PTX) domain. Cys249 and Cys309 are oxidised to a cystine. The Ca(2+) site is built by Asn273, Glu351, Gln352, Asp353, and Gln363. N-linked (GlcNAc...) asparagine glycosylation occurs at Asn389.

Homooligomer or heterooligomer (probably pentamer) with neuronal pentraxin receptor (NPTXR). Ca(2+) is required as a cofactor. Testis specific.

The protein resides in the cytoplasmic vesicle. Its subcellular location is the secretory vesicle. The protein localises to the acrosome lumen. Its function is as follows. May be involved in binding, concentrating, and sorting soluble glycoproteins or glycolipids that are destined for the acrosome. This Cavia porcellus (Guinea pig) protein is Neuronal pentraxin-2 (NPTX2).